A 175-amino-acid polypeptide reads, in one-letter code: MTINPDDDNIEILTGAAGGADTEGEGEGEGKSLTDLVEQPAKVMRIGTMIKQLLEEVRAAPLDDASRNRLREIHQTSIRELEDGLAPELREELERLTLPFTDDNVPSDAELRIAQAQLVGWLEGLFHGIQTALFAQQMAARAQLEQMRQGALPPGIQVPGAQRGGATHPGTGQYL.

The segment at 152–175 is disordered; it reads LPPGIQVPGAQRGGATHPGTGQYL. The HbYX motif signature appears at 173–175; that stretch reads QYL.

Belongs to the Bpa family. Forms a homooligomeric, either hexameric or heptameric, ring-like structure which stacks co-axially with the proteasomal alpha-rings.

Interacts with the core proteasome alpha-subunit (PrcA) through its C-terminal hydrophobic-tyrosine-X motif (HbYX motif). Interaction of Bpa with the proteasome stimulates proteasomal peptidase and casein degradation activity, which suggests Bpa could play a role in the removal of non-native or damaged proteins by influencing the conformation of the proteasome complex upon interaction. The polypeptide is Bacterial proteasome activator (Mycolicibacterium smegmatis (strain ATCC 700084 / mc(2)155) (Mycobacterium smegmatis)).